The following is a 72-amino-acid chain: Disintegrin cotiarin (72 aa).

The 72-residue stretch at 1–72 (EAGEECDCGA…SADCPRNRFH (72 aa)) folds into the Disintegrin domain. 6 disulfides stabilise this stretch: Cys6–Cys21, Cys8–Cys16, Cys15–Cys38, Cys29–Cys35, Cys34–Cys59, and Cys47–Cys66. The Cell attachment site motif lies at 51-53 (RGD). Positions 51-72 (RGDNPDDRCTGQSADCPRNRFH) are disordered.

The protein belongs to the venom metalloproteinase (M12B) family. P-II subfamily. P-IIa sub-subfamily. Monomer. In terms of tissue distribution, expressed by the venom gland.

Its subcellular location is the secreted. Its function is as follows. Inhibits fibrinogen interaction with platelets. Acts by binding to alpha-IIb/beta-3 (ITGA2B/ITGB3) on the platelet surface and inhibits aggregation induced by ADP, thrombin, platelet-activating factor and collagen. The polypeptide is Disintegrin cotiarin (Bothrops cotiara (Cotiara)).